The primary structure comprises 248 residues: UPF0736 protein BT9727_1080 (248 aa).

Belongs to the UPF0736 family.

The chain is UPF0736 protein BT9727_1080 from Bacillus thuringiensis subsp. konkukian (strain 97-27).